The primary structure comprises 200 residues: Probable nicotinate-nucleotide adenylyltransferase (200 aa).

This sequence belongs to the NadD family.

It carries out the reaction nicotinate beta-D-ribonucleotide + ATP + H(+) = deamido-NAD(+) + diphosphate. It participates in cofactor biosynthesis; NAD(+) biosynthesis; deamido-NAD(+) from nicotinate D-ribonucleotide: step 1/1. In terms of biological role, catalyzes the reversible adenylation of nicotinate mononucleotide (NaMN) to nicotinic acid adenine dinucleotide (NaAD). The polypeptide is Probable nicotinate-nucleotide adenylyltransferase (Clostridium novyi (strain NT)).